Consider the following 55-residue polypeptide: Small polypeptide DEVIL 10 (55 aa).

N7 is a glycosylation site (N-linked (GlcNAc...) asparagine). The required for DVL/RTFL small polypeptide activity stretch occupies residues 19 to 50 (RFGDRCLLMAKQQRTRLYILRRCVSMLLCWHD). The chain crosses the membrane as a helical span at residues 32 to 48 (RTRLYILRRCVSMLLCW).

This sequence belongs to the DVL/RTFL small polypeptides family.

The protein localises to the cell membrane. In terms of biological role, small polypeptide acting as a regulatory molecule which coordinates cellular responses required for differentiation, growth and development, probably by restricting polar cell proliferation in lateral organs and coordinating socket cell recruitment and differentiation at trichome sites. The chain is Small polypeptide DEVIL 10 from Arabidopsis thaliana (Mouse-ear cress).